The sequence spans 130 residues: Iron-sulfur cluster insertion protein ErpA (130 aa).

Iron-sulfur cluster contacts are provided by cysteine 46, cysteine 116, and cysteine 118.

It belongs to the HesB/IscA family. As to quaternary structure, homodimer. The cofactor is iron-sulfur cluster.

Required for insertion of 4Fe-4S clusters for at least IspG. This chain is Iron-sulfur cluster insertion protein ErpA, found in Legionella pneumophila (strain Lens).